The primary structure comprises 370 residues: MKREKKDYYEILGVPRNATQEEIRKAYKRLVKEWHPDRHPENRKEAEQRFKEIQEAYEVLSDPQKRAMYDRFGYVGEQPVYQEAETGGSFFEDVFREFENIFNRDIFDVFFGEESGRRERREYARRGEDIRYTIEVNLSDLINGTEIPIEYERYETCPRCGGTGVEPDSGYISCPRCGGTGRIREEKRSFFGYFVSERTCDECGGTGRVPQELCHECGGSGRVLRRVRRTIKIPPNIEDGGHLRIPGGGNAGYYGGPYGDLIITVRVRSDSRFKRSGKDLIYDITIDYLQAILGTTVEIPLPEGGTTMLKIPPGTQPETVFRLKGKGLPGEYGRRGDLLVNVHVEIPKNLSREERKVLEDLAKKRGIPVA.

In terms of domain architecture, J spans D7–G73. Residues G144–R226 form a CR-type zinc finger. Residues C157, C160, C174, C177, C200, C203, C214, and C217 each contribute to the Zn(2+) site. CXXCXGXG motif repeat units follow at residues C157–G164, C174–G181, C200–G207, and C214–G221.

It belongs to the DnaJ family. As to quaternary structure, homodimer. Zn(2+) is required as a cofactor.

The protein localises to the cytoplasm. In terms of biological role, participates actively in the response to hyperosmotic and heat shock by preventing the aggregation of stress-denatured proteins and by disaggregating proteins, also in an autonomous, DnaK-independent fashion. Unfolded proteins bind initially to DnaJ; upon interaction with the DnaJ-bound protein, DnaK hydrolyzes its bound ATP, resulting in the formation of a stable complex. GrpE releases ADP from DnaK; ATP binding to DnaK triggers the release of the substrate protein, thus completing the reaction cycle. Several rounds of ATP-dependent interactions between DnaJ, DnaK and GrpE are required for fully efficient folding. Also involved, together with DnaK and GrpE, in the DNA replication of plasmids through activation of initiation proteins. This is Chaperone protein DnaJ from Thermotoga neapolitana (strain ATCC 49049 / DSM 4359 / NBRC 107923 / NS-E).